The primary structure comprises 134 residues: Phosphoribosyl-AMP cyclohydrolase (134 aa).

Position 90 (Asp90) interacts with Mg(2+). Cys91 provides a ligand contact to Zn(2+). The Mg(2+) site is built by Asp92 and Asp94. Positions 107 and 114 each coordinate Zn(2+).

The protein belongs to the PRA-CH family. In terms of assembly, homodimer. The cofactor is Mg(2+). Zn(2+) serves as cofactor.

The protein resides in the cytoplasm. It catalyses the reaction 1-(5-phospho-beta-D-ribosyl)-5'-AMP + H2O = 1-(5-phospho-beta-D-ribosyl)-5-[(5-phospho-beta-D-ribosylamino)methylideneamino]imidazole-4-carboxamide. It participates in amino-acid biosynthesis; L-histidine biosynthesis; L-histidine from 5-phospho-alpha-D-ribose 1-diphosphate: step 3/9. Its function is as follows. Catalyzes the hydrolysis of the adenine ring of phosphoribosyl-AMP. The chain is Phosphoribosyl-AMP cyclohydrolase from Arthrobacter sp. (strain FB24).